We begin with the raw amino-acid sequence, 335 residues long: Biotin synthase (335 aa).

One can recognise a Radical SAM core domain in the interval 43 to 269 (YFGKKVKLNM…INPTKEIRIA (227 aa)). The [4Fe-4S] cluster site is built by Cys61, Cys65, and Cys68. [2Fe-2S] cluster-binding residues include Cys104, Cys137, Cys197, and Arg267.

It belongs to the radical SAM superfamily. Biotin synthase family. As to quaternary structure, homodimer. [4Fe-4S] cluster is required as a cofactor. The cofactor is [2Fe-2S] cluster.

It carries out the reaction (4R,5S)-dethiobiotin + (sulfur carrier)-SH + 2 reduced [2Fe-2S]-[ferredoxin] + 2 S-adenosyl-L-methionine = (sulfur carrier)-H + biotin + 2 5'-deoxyadenosine + 2 L-methionine + 2 oxidized [2Fe-2S]-[ferredoxin]. It participates in cofactor biosynthesis; biotin biosynthesis; biotin from 7,8-diaminononanoate: step 2/2. Functionally, catalyzes the conversion of dethiobiotin (DTB) to biotin by the insertion of a sulfur atom into dethiobiotin via a radical-based mechanism. The protein is Biotin synthase of Staphylococcus aureus (strain MRSA252).